We begin with the raw amino-acid sequence, 553 residues long: uncharacterized protein (553 aa).

5 helical membrane-spanning segments follow: residues 13–30, 37–59, 69–91, 98–120, and 157–179; these read ALQA…GLGL, GISL…GLSI, SFGL…FSSF, LNML…SYTT, and TPAL…AVLL. RCK C-terminal domains follow at residues 190–273 and 281–365; these read LEVQ…LFGE and KEDI…VLGN. Helical transmembrane passes span 375–397, 402–424, 436–458, 468–490, 497–514, and 529–551; these read LVAV…SIPG, VRLG…GPRL, LMLR…GAHF, LLWI…FFAF, FGSV…PMAL, and AYAT…LLMF.

It belongs to the AAE transporter (TC 2.A.81) family.

The protein localises to the cell membrane. This is an uncharacterized protein from Bacteroides fragilis (strain YCH46).